The following is a 258-amino-acid chain: Phosphate import ATP-binding protein PstB 1 (258 aa).

Positions 5 to 247 (LDLTDVNIYY…EKIFSNPNQK (243 aa)) constitute an ABC transporter domain. 37-44 (GPSGCGKT) is a binding site for ATP.

It belongs to the ABC transporter superfamily. Phosphate importer (TC 3.A.1.7) family. In terms of assembly, the complex is composed of two ATP-binding proteins (PstB), two transmembrane proteins (PstC and PstA) and a solute-binding protein (PstS).

The protein localises to the cell membrane. The catalysed reaction is phosphate(out) + ATP + H2O = ADP + 2 phosphate(in) + H(+). Functionally, part of the ABC transporter complex PstSACB involved in phosphate import. Responsible for energy coupling to the transport system. The polypeptide is Phosphate import ATP-binding protein PstB 1 (Mycobacterium bovis (strain ATCC BAA-935 / AF2122/97)).